Reading from the N-terminus, the 371-residue chain is GDSL esterase/lipase At3g27950 (371 aa).

Residues 1–23 form the signal peptide; it reads MAISKITLAIIVLLLGFTEKLSA. Ser-39 functions as the Nucleophile in the catalytic mechanism. Asn-82, Asn-143, Asn-178, Asn-194, and Asn-315 each carry an N-linked (GlcNAc...) asparagine glycan. Active-site residues include Asp-334 and His-337.

Belongs to the 'GDSL' lipolytic enzyme family.

It is found in the secreted. The protein is GDSL esterase/lipase At3g27950 of Arabidopsis thaliana (Mouse-ear cress).